The chain runs to 99 residues: HTH-type transcriptional regulator YgaV (99 aa).

The 93-residue stretch at 7–99 (LQASAEQAAA…IATLKNVYCP (93 aa)) folds into the HTH arsR-type domain. Positions 41–64 (AGELTRITGLSASATSQHLARMRD) form a DNA-binding region, H-T-H motif.

Its activity is regulated as follows. In the presence of H(2)S, two cysteine residues form an intramolecular tetrasulfide bond, which attenuates the binding of YgaV to DNA. Both unmodified YgaV and sulfide-modified YgaV can probably function as either a repressor or an activator. Binds heme, which may influence the DNA-binding affinity. Transcriptional regulator that regulates large-scale gene expression in response to sulfide. May act as a global regulator responsible for redox homeostasis. It functions as both a repressor and an activator. In the absence of sulfide compounds, it negatively regulates many anaerobic respiratory genes, including formate, fumarate, lactate, nitrate and nitrite reductase genes. In the presence of hydrogen sulfide (H(2)S), YgaV activity is attenuated, leading to the expression of anaerobic respiratory and ROS scavenging genes, which contributes to redox homeostasis, reactive oxygen species (ROS) scavenging and antibiotic tolerance. It responds to H(2)O(2) scavenging and increases antibiotic tolerance under H(2)S-atmospheric conditions. It also negatively regulates its own expression by binding to the ygaVP promoter region. May also be involved in regulatory mechanisms that operate independently of sulfide. The chain is HTH-type transcriptional regulator YgaV (ygaV) from Escherichia coli (strain K12).